The sequence spans 501 residues: UDP-N-acetylmuramate--L-alanine ligase (501 aa).

130-136 provides a ligand contact to ATP; it reads GTHGKTS.

Belongs to the MurCDEF family.

The protein resides in the cytoplasm. The enzyme catalyses UDP-N-acetyl-alpha-D-muramate + L-alanine + ATP = UDP-N-acetyl-alpha-D-muramoyl-L-alanine + ADP + phosphate + H(+). It functions in the pathway cell wall biogenesis; peptidoglycan biosynthesis. Functionally, cell wall formation. This Nocardia farcinica (strain IFM 10152) protein is UDP-N-acetylmuramate--L-alanine ligase.